Consider the following 497-residue polypeptide: Glutamate--tRNA ligase (497 aa).

A 'HIGH' region motif is present at residues 13-23 (PSPTGDPHVGT). The 'KMSKS' region signature appears at 253 to 257 (KISKR). Residue Lys-256 participates in ATP binding.

It belongs to the class-I aminoacyl-tRNA synthetase family. Glutamate--tRNA ligase type 1 subfamily. As to quaternary structure, monomer.

It localises to the cytoplasm. It catalyses the reaction tRNA(Glu) + L-glutamate + ATP = L-glutamyl-tRNA(Glu) + AMP + diphosphate. Functionally, catalyzes the attachment of glutamate to tRNA(Glu) in a two-step reaction: glutamate is first activated by ATP to form Glu-AMP and then transferred to the acceptor end of tRNA(Glu). The protein is Glutamate--tRNA ligase of Cutibacterium acnes (strain DSM 16379 / KPA171202) (Propionibacterium acnes).